A 350-amino-acid chain; its full sequence is Glyceraldehyde-3-phosphate dehydrogenase (350 aa).

NAD(+) is bound by residues 13-14 and Gly-118; that span reads TI. 147–149 serves as a coordination point for D-glyceraldehyde 3-phosphate; it reads SCN. The active-site Nucleophile is the Cys-148. Residue Arg-176 participates in NAD(+) binding. Residue 202–203 participates in D-glyceraldehyde 3-phosphate binding; that stretch reads HG. Position 309 (Gln-309) interacts with NAD(+). The interval 327–350 is disordered; the sequence is LEEDPEASMDATDSALGVLNSPPL.

This sequence belongs to the glyceraldehyde-3-phosphate dehydrogenase family. Homotetramer.

The protein localises to the cytoplasm. The enzyme catalyses D-glyceraldehyde 3-phosphate + phosphate + NADP(+) = (2R)-3-phospho-glyceroyl phosphate + NADPH + H(+). The catalysed reaction is D-glyceraldehyde 3-phosphate + phosphate + NAD(+) = (2R)-3-phospho-glyceroyl phosphate + NADH + H(+). The protein operates within carbohydrate degradation; glycolysis; pyruvate from D-glyceraldehyde 3-phosphate: step 1/5. This is Glyceraldehyde-3-phosphate dehydrogenase from Methanopyrus kandleri (strain AV19 / DSM 6324 / JCM 9639 / NBRC 100938).